Here is a 282-residue protein sequence, read N- to C-terminus: Structure-specific endonuclease subunit slx1 (282 aa).

In terms of domain architecture, GIY-YIG spans 7-97 (GFYGVYLLFC…RLTHVPRKTK (91 aa)). The segment at 191-243 (CRVCYERVQDKDDSLHCFHPGCTLTAHIMCLAKLFLLNEPQNLIPVEGLCPSC) adopts an SLX1-type zinc-finger fold.

This sequence belongs to the SLX1 family. Forms a heterodimer with slx4. Requires a divalent metal cation as cofactor.

The protein localises to the nucleus. Its function is as follows. Catalytic subunit of the slx1-slx4 structure-specific endonuclease that resolves DNA secondary structures generated during DNA repair and recombination. Has endonuclease activity towards branched DNA substrates, introducing single-strand cuts in duplex DNA close to junctions with ss-DNA. This Xenopus laevis (African clawed frog) protein is Structure-specific endonuclease subunit slx1 (slx1a).